We begin with the raw amino-acid sequence, 497 residues long: Probable polyamine oxidase 4 (497 aa).

FAD-binding residues include glutamate 58, arginine 66, valine 247, and glutamate 435. A Microbody targeting signal motif is present at residues serine 495 to methionine 497.

Belongs to the flavin monoamine oxidase family. Requires FAD as cofactor. Highly expressed in roots, flowers and greening cotelydons. Lower expression in other tissues.

Its subcellular location is the peroxisome. It carries out the reaction spermine + O2 + H2O = 3-aminopropanal + spermidine + H2O2. The catalysed reaction is spermidine + O2 + H2O = 3-aminopropanal + putrescine + H2O2. Its pathway is amine and polyamine degradation; spermine degradation. It functions in the pathway amine and polyamine degradation; spermidine degradation. Its function is as follows. Flavoenzyme involved in polyamine back-conversion. Catalyzes the oxidation of the secondary amino group of polyamines, such as spermine and spermidine. Substrate preference is spermine &gt; spermidine. No activity detected when putrescine or N(1)-acetylspermine are used as substrates. Plays an important role in the regulation of polyamine intracellular concentration. In Arabidopsis thaliana (Mouse-ear cress), this protein is Probable polyamine oxidase 4 (PAO4).